We begin with the raw amino-acid sequence, 895 residues long: Endochitinase 2 (895 aa).

A signal peptide spans 1 to 22 (MGLTNILAAFIAVSSLFIQSLA). Residues 29–340 (SNLAVYWGQG…DIMKEVLLRC (312 aa)) form the GH18 domain. Asn90 carries N-linked (GlcNAc...) asparagine glycosylation. Glu175 acts as the Proton donor in catalysis. The tract at residues 343–712 (DPPTSTVTST…APSSSTTEDR (370 aa)) is disordered. The segment covering 346–425 (TSTVTSTISA…ISTRSASTET (80 aa)) has biased composition (low complexity). Residues 426–478 (VTTRSQEPPSTTISTRPASTETVTTRSQEPPSSTISTRSASTETVTTRSQEPP) show a composition bias toward polar residues. Residues 479–505 (SSTISTRSASTETSTSSQDSPSTTIST) are compositionally biased toward low complexity. A compositionally biased stretch (polar residues) spans 506–543 (KSAPTGTVTTRSQDLPSTTISTRSPETETETVTTKSQD). Low complexity predominate over residues 544–555 (SPSITLSTRSSS). The span at 556–577 (AETVSTRSQHSSSTTISTKSAP) shows a compositional bias: polar residues. Positions 578-589 (TETGTTSEHSTS) are enriched in low complexity. Over residues 590–657 (MPVSTRSAST…ISTELPSQTH (68 aa)) the composition is skewed to polar residues. 2 stretches are compositionally biased toward low complexity: residues 658-692 (STTD…APTT) and 699-712 (TLTL…TEDR). Gly866 is lipidated: GPI-anchor amidated glycine. A propeptide spans 867-895 (GAMTVRSMDVVAKALITAGAAVLGLFLGL) (removed in mature form).

The protein belongs to the glycosyl hydrolase 18 family. Chitinase class III subfamily.

It is found in the cell membrane. The catalysed reaction is Random endo-hydrolysis of N-acetyl-beta-D-glucosaminide (1-&gt;4)-beta-linkages in chitin and chitodextrins.. May be associated with endosporulation. In Coccidioides immitis (strain RS) (Valley fever fungus), this protein is Endochitinase 2 (CTS2).